An 853-amino-acid polypeptide reads, in one-letter code: DNA mismatch repair protein MutS (853 aa).

An ATP-binding site is contributed by 613-620 (GPNMGGKS).

Belongs to the DNA mismatch repair MutS family.

Its function is as follows. This protein is involved in the repair of mismatches in DNA. It is possible that it carries out the mismatch recognition step. This protein has a weak ATPase activity. The polypeptide is DNA mismatch repair protein MutS (Vibrio campbellii (strain ATCC BAA-1116)).